Here is a 161-residue protein sequence, read N- to C-terminus: Putative pre-16S rRNA nuclease (161 aa).

This sequence belongs to the YqgF nuclease family.

The protein localises to the cytoplasm. Its function is as follows. Could be a nuclease involved in processing of the 5'-end of pre-16S rRNA. This is Putative pre-16S rRNA nuclease from Bradyrhizobium sp. (strain BTAi1 / ATCC BAA-1182).